An 888-amino-acid polypeptide reads, in one-letter code: Transmembrane channel-like protein 2 (888 aa).

Residues 1–128 form a disordered region; sequence MSPQLKSLDE…SLGSSVSTGD (128 aa). The Cytoplasmic segment spans residues 1 to 228; the sequence is MSPQLKSLDE…KIKDIESHFG (228 aa). Basic and acidic residues-rich tracts occupy residues 7-16, 32-44, and 87-110; these read SLDEEGDKSA, DGHR…KDPA, and RTSL…EAGK. Over residues 117 to 128 the composition is skewed to polar residues; the sequence is STSLGSSVSTGD. The chain crosses the membrane as a helical span at residues 229–266; that stretch reads SSVASYFIFLRWMYGVNLVLFGLIFGLVIIPEVLMGMP. At 267–317 the chain is on the extracellular side; that stretch reads YGSIPRKTVPRAEEERAMDFSVLWDFEGYIKYSALFYGYYNNQRTIGWLRY. The chain crosses the membrane as a helical span at residues 318-350; it reads RLPMAYFMVGVSVFGYSLMIVIRSMASNTQGST. Topologically, residues 351 to 406 are cytoplasmic; it reads SEGDSDSFTFSFKMFTSWDYLIGNSETADNKYVSITTSFKESIVDEQESNKEGNIH. Residues 407-437 traverse the membrane as a helical segment; it reads LTRFLRVLANFLILCCLCGSGYLIYFVVKRS. Over 438 to 447 the chain is Extracellular; the sequence is QEFSKMQNVS. A helical membrane pass occupies residues 448-475; the sequence is WYERNEVEIVMSLLGMFCPPLFETIAAL. Topologically, residues 476 to 479 are cytoplasmic; sequence ENYH. The chain crosses the membrane as a helical span at residues 480–514; sequence PRTGLKWQLGRIFALFLGNLYTFLLALMDDVHLKL. Residues 515–556 lie on the Extracellular side of the membrane; the sequence is SNEEKIKNITHWTLFNYYNSSGGNESVPRPPPHPADVPRGSC. A helical membrane pass occupies residues 557 to 594; sequence WETAVGIEFMRLTVSDMLVTYLTILVGDFLRACFVRFM. Residues 595–613 are Cytoplasmic-facing; sequence NHCWCWDLEAGFPSYAEFD. The helical transmembrane segment at 614–634 threads the bilayer; sequence ISGNVLGLIFNQGMIWMGSFY. Over 635–637 the chain is Extracellular; that stretch reads APG. The helical transmembrane segment at 638–660 threads the bilayer; sequence LVGINVLRLLTSMYFQCWAVMSS. Residues 661–674 are Cytoplasmic-facing; it reads NVPHERVFKASRSN. The helical transmembrane segment at 675 to 698 threads the bilayer; it reads NFYMGLLLLVLFLSLLPVAYTVMS. The Extracellular segment spans residues 699-741; sequence LPPSFDCGPFSGKNRMYDVLHETIENDFPKFLGKIFAFLANPG. A helical membrane pass occupies residues 742 to 775; sequence LIIPAILLMFLAIYYLNSVSKSLSRANAQLRKKI. Topologically, residues 776–888 are cytoplasmic; the sequence is QALREVEKNH…SGKRTQRPHN (113 aa). The tract at residues 813 to 888 is disordered; the sequence is LTKEEPTSHS…SGKRTQRPHN (76 aa). Polar residues-rich tracts occupy residues 836 to 851 and 866 to 881; these read PHTS…STSW and GQPQ…PSGK.

Belongs to the TMC family. In terms of assembly, forms the MET channel composed of TMC dimer (TMC1 or TMC2), TMIE, TOMT, CIB (CIB2 or CIB3), LHFPL5 and PDH15. The interaction of TMC1 and TMC2 with TOMT is required for the transportation of TMC1/2 into the stereocilia of hair cells. Interacts (via N-terminus) with both isoforms CD1 and CD3 of PCDH15. Can form a heterodimer with TMC1, TMC5 or TMC7. As to expression, inner ear and testis. Expressed in cochlear inner and outer hair cells and vestibular organ hair cells.

Its subcellular location is the cell membrane. It catalyses the reaction Ca(2+)(in) = Ca(2+)(out). Pore-forming subunit of the mechanotransducer (MET) non-selective cation channel complex located at the tips of stereocilia of cochlear hair cells and that mediates sensory transduction in the auditory system. The MET complex is composed of two dimeric pore-forming ion-conducting transmembrane TMC (TMC1 or TMC2) subunits, several auxiliary proteins including LHFPL5, TMIE, CIB2/3 and TOMT, the tip-link PCDH15, and possibly the PIEZO subunits. MET channel is activated by tension in the tip-link extending from the side wall of one stereocilium to the tip of the adjacent shorter stereocilium, where the channel is located. TMC2 MET channel is highly permeable to calcium and likely transports monovalent cations. Also involved in vestibular hair cell transduction current of the mammalian inner ear. This is Transmembrane channel-like protein 2 from Mus musculus (Mouse).